Consider the following 913-residue polypeptide: DNA mismatch repair protein MutS (913 aa).

The interval 18-50 is disordered; that stretch reads NNKQKEKTKIPEDLSLEDLKKESQKRPRQRKNS. The span at 19 to 42 shows a compositional bias: basic and acidic residues; that stretch reads NKQKEKTKIPEDLSLEDLKKESQK. 720 to 727 provides a ligand contact to ATP; it reads GPNASGKS.

Belongs to the DNA mismatch repair MutS family.

Its function is as follows. This protein is involved in the repair of mismatches in DNA. It is possible that it carries out the mismatch recognition step. This protein has a weak ATPase activity. The sequence is that of DNA mismatch repair protein MutS from Prochlorococcus marinus (strain MIT 9301).